The chain runs to 741 residues: NUT family member 2G (741 aa).

Disordered regions lie at residues 172–200 (PGNA…PDDS), 293–375 (IQKS…PEEI), 391–424 (LGSH…SDPG), 496–624 (RAAP…LPGM), and 638–741 (RLSQ…HCSQ). Positions 304-321 (SLPPPAPPRLEPRGPPAP) are enriched in pro residues. A compositionally biased stretch (basic and acidic residues) spans 402–412 (EGQREKGKVEQ). A compositionally biased stretch (polar residues) spans 528–545 (QRVSVETSPPQTAAQDPQ). Residues 639–650 (LSQSPVPSSGLL) are compositionally biased toward low complexity. Residues 731–741 (SRRKKKRHCSQ) show a composition bias toward basic residues.

The protein belongs to the NUT family.

The chain is NUT family member 2G (NUTM2G) from Homo sapiens (Human).